The following is a 354-amino-acid chain: Holliday junction branch migration complex subunit RuvB (354 aa).

Residues 4 to 190 form a large ATPase domain (RuvB-L) region; it reads TDKLAAERII…FGIVARLEFY (187 aa). ATP is bound by residues leucine 29, arginine 30, glycine 71, lysine 74, threonine 75, threonine 76, 137–139, arginine 180, tyrosine 190, and arginine 227; that span reads EDY. Threonine 75 serves as a coordination point for Mg(2+). Residues 191-261 are small ATPAse domain (RuvB-S); that stretch reads NAEELARIVT…VADAALKMLD (71 aa). The segment at 264–354 is head domain (RuvB-H); the sequence is AVGFDLMDRK…LPGLWDSAAT (91 aa). Arginine 300, arginine 319, and arginine 324 together coordinate DNA.

This sequence belongs to the RuvB family. In terms of assembly, homohexamer. Forms an RuvA(8)-RuvB(12)-Holliday junction (HJ) complex. HJ DNA is sandwiched between 2 RuvA tetramers; dsDNA enters through RuvA and exits via RuvB. An RuvB hexamer assembles on each DNA strand where it exits the tetramer. Each RuvB hexamer is contacted by two RuvA subunits (via domain III) on 2 adjacent RuvB subunits; this complex drives branch migration. In the full resolvosome a probable DNA-RuvA(4)-RuvB(12)-RuvC(2) complex forms which resolves the HJ.

Its subcellular location is the cytoplasm. It carries out the reaction ATP + H2O = ADP + phosphate + H(+). Its function is as follows. The RuvA-RuvB-RuvC complex processes Holliday junction (HJ) DNA during genetic recombination and DNA repair, while the RuvA-RuvB complex plays an important role in the rescue of blocked DNA replication forks via replication fork reversal (RFR). RuvA specifically binds to HJ cruciform DNA, conferring on it an open structure. The RuvB hexamer acts as an ATP-dependent pump, pulling dsDNA into and through the RuvAB complex. RuvB forms 2 homohexamers on either side of HJ DNA bound by 1 or 2 RuvA tetramers; 4 subunits per hexamer contact DNA at a time. Coordinated motions by a converter formed by DNA-disengaged RuvB subunits stimulates ATP hydrolysis and nucleotide exchange. Immobilization of the converter enables RuvB to convert the ATP-contained energy into a lever motion, pulling 2 nucleotides of DNA out of the RuvA tetramer per ATP hydrolyzed, thus driving DNA branch migration. The RuvB motors rotate together with the DNA substrate, which together with the progressing nucleotide cycle form the mechanistic basis for DNA recombination by continuous HJ branch migration. Branch migration allows RuvC to scan DNA until it finds its consensus sequence, where it cleaves and resolves cruciform DNA. This Paraburkholderia phytofirmans (strain DSM 17436 / LMG 22146 / PsJN) (Burkholderia phytofirmans) protein is Holliday junction branch migration complex subunit RuvB.